A 447-amino-acid chain; its full sequence is MITIKKGLDLPIAGKPAQVIHSGNAVNQVAILGEEYVGMRPSMKVREGDVVKKGQVLFEDKKNPGVIFTAPASGTITAINRGEKRVLQSVVINVEGDEKITFAKYSTEQLNTLSSEQVKQNLIESGLWTALRTRPFSKVPSIESEASSIFVNAMDTNPLAADPSVVLKEYSQDFTNGLTVLSRLFPSKPLHLCKAGDSNIPTADLENLQIHDFTGVHPAGLVGTHIHFIDPVGIQKTVWHINYQDVIAVGKLFTTGELYSERVISLAGPQVKEPRLVRTIIGANLSQLTQNELSAGKNRVISGSVLCGQIAKDSHDYLGRYALQVSVIAEGNEKEFFGWIMPQANKYSVTRTVLGHFSKKLFNFTTSENGGERAMVPIGSYERVMPLDILPTLLLRDLIVGDTDGAQELGCLELDEEDLALCSFVCPGKYEYGSILRQVLDKIEKEG.

It belongs to the NqrA family. In terms of assembly, composed of six subunits; NqrA, NqrB, NqrC, NqrD, NqrE and NqrF.

The enzyme catalyses a ubiquinone + n Na(+)(in) + NADH + H(+) = a ubiquinol + n Na(+)(out) + NAD(+). In terms of biological role, NQR complex catalyzes the reduction of ubiquinone-1 to ubiquinol by two successive reactions, coupled with the transport of Na(+) ions from the cytoplasm to the periplasm. NqrA to NqrE are probably involved in the second step, the conversion of ubisemiquinone to ubiquinol. The chain is Na(+)-translocating NADH-quinone reductase subunit A from Haemophilus influenzae (strain 86-028NP).